Consider the following 213-residue polypeptide: GTP cyclohydrolase 1 (213 aa).

Residues Cys104, His107, and Cys175 each coordinate Zn(2+).

Belongs to the GTP cyclohydrolase I family. In terms of assembly, homomer.

It catalyses the reaction GTP + H2O = 7,8-dihydroneopterin 3'-triphosphate + formate + H(+). Its pathway is cofactor biosynthesis; 7,8-dihydroneopterin triphosphate biosynthesis; 7,8-dihydroneopterin triphosphate from GTP: step 1/1. In Brucella canis (strain ATCC 23365 / NCTC 10854 / RM-666), this protein is GTP cyclohydrolase 1.